Here is a 498-residue protein sequence, read N- to C-terminus: Probable cytosol aminopeptidase (498 aa).

Lys-264 and Asp-269 together coordinate Mn(2+). Lys-276 is an active-site residue. Asp-287, Asp-346, and Glu-348 together coordinate Mn(2+). Arg-350 is an active-site residue.

The protein belongs to the peptidase M17 family. The cofactor is Mn(2+).

The protein resides in the cytoplasm. It catalyses the reaction Release of an N-terminal amino acid, Xaa-|-Yaa-, in which Xaa is preferably Leu, but may be other amino acids including Pro although not Arg or Lys, and Yaa may be Pro. Amino acid amides and methyl esters are also readily hydrolyzed, but rates on arylamides are exceedingly low.. The catalysed reaction is Release of an N-terminal amino acid, preferentially leucine, but not glutamic or aspartic acids.. Functionally, presumably involved in the processing and regular turnover of intracellular proteins. Catalyzes the removal of unsubstituted N-terminal amino acids from various peptides. The chain is Probable cytosol aminopeptidase from Rhizobium rhizogenes (strain K84 / ATCC BAA-868) (Agrobacterium radiobacter).